A 505-amino-acid polypeptide reads, in one-letter code: Deoxyguanosinetriphosphate triphosphohydrolase (505 aa).

The HD domain maps to 66 to 273 (RLTHSMEVQQ…MEAADDISYC (208 aa)).

The protein belongs to the dGTPase family. Type 1 subfamily. In terms of assembly, homotetramer. The cofactor is Mg(2+).

It carries out the reaction dGTP + H2O = 2'-deoxyguanosine + triphosphate + H(+). DGTPase preferentially hydrolyzes dGTP over the other canonical NTPs. In Serratia proteamaculans (strain 568), this protein is Deoxyguanosinetriphosphate triphosphohydrolase.